A 429-amino-acid chain; its full sequence is L-cysteine:1D-myo-inositol 2-amino-2-deoxy-alpha-D-glucopyranoside ligase (429 aa).

Position 60 (Cys-60) interacts with Zn(2+). L-cysteinyl-5'-AMP contacts are provided by residues 60 to 63 (CGIT), Thr-75, and 98 to 100 (NIT). The short motif at 62-72 (ITPYDATHLGH) is the 'HIGH' region element. The 'ERGGDP' region signature appears at 204–209 (ERGGDP). Trp-244 contacts L-cysteinyl-5'-AMP. Cys-248 provides a ligand contact to Zn(2+). 266 to 268 (GSD) contacts L-cysteinyl-5'-AMP. His-273 is a Zn(2+) binding site. Ile-300 is an L-cysteinyl-5'-AMP binding site. The 'KMSKS' region motif lies at 306 to 310 (KMSKS).

This sequence belongs to the class-I aminoacyl-tRNA synthetase family. MshC subfamily. In terms of assembly, monomer. Requires Zn(2+) as cofactor.

The catalysed reaction is 1D-myo-inositol 2-amino-2-deoxy-alpha-D-glucopyranoside + L-cysteine + ATP = 1D-myo-inositol 2-(L-cysteinylamino)-2-deoxy-alpha-D-glucopyranoside + AMP + diphosphate + H(+). Catalyzes the ATP-dependent condensation of GlcN-Ins and L-cysteine to form L-Cys-GlcN-Ins. This chain is L-cysteine:1D-myo-inositol 2-amino-2-deoxy-alpha-D-glucopyranoside ligase, found in Mycolicibacterium vanbaalenii (strain DSM 7251 / JCM 13017 / BCRC 16820 / KCTC 9966 / NRRL B-24157 / PYR-1) (Mycobacterium vanbaalenii).